Consider the following 261-residue polypeptide: tRNA (guanine-N(7)-)-methyltransferase (261 aa).

4 residues coordinate S-adenosyl-L-methionine: glutamate 75, glutamate 100, aspartate 127, and aspartate 150. Aspartate 150 is an active-site residue. Substrate is bound at residue lysine 154. Residues 156–161 (RHNKRR) are interaction with RNA. Substrate contacts are provided by residues aspartate 186 and 223 to 226 (THFE).

This sequence belongs to the class I-like SAM-binding methyltransferase superfamily. TrmB family.

It catalyses the reaction guanosine(46) in tRNA + S-adenosyl-L-methionine = N(7)-methylguanosine(46) in tRNA + S-adenosyl-L-homocysteine. It participates in tRNA modification; N(7)-methylguanine-tRNA biosynthesis. In terms of biological role, catalyzes the formation of N(7)-methylguanine at position 46 (m7G46) in tRNA. In Xanthomonas axonopodis pv. citri (strain 306), this protein is tRNA (guanine-N(7)-)-methyltransferase.